We begin with the raw amino-acid sequence, 297 residues long: Proline iminopeptidase (297 aa).

The AB hydrolase-1 domain maps to 26–131; that stretch reads VLLLHGGPAM…GLLVSNMMAS (106 aa). Ser-103 (nucleophile) is an active-site residue. Residue Asp-243 is part of the active site. Residue His-270 is the Proton donor of the active site.

This sequence belongs to the peptidase S33 family. Monomer.

The enzyme catalyses Release of N-terminal proline from a peptide.. Releases the N-terminal proline from various substrates. The chain is Proline iminopeptidase (fpaP) from Flavobacterium johnsoniae (strain ATCC 17061 / DSM 2064 / JCM 8514 / BCRC 14874 / CCUG 350202 / NBRC 14942 / NCIMB 11054 / UW101) (Cytophaga johnsonae).